Consider the following 198-residue polypeptide: MIKDNIKLKLTIIGDWNVGKSSLLYRFFNDVFYEQTKLSMGEHFFYKTVLIRGESIDLQITDTSGMEKFRSLNNSFYSNLDGILIVYDISDQETFENTKLWLNEANKLAPKDCIKIIVASKFDLENKVVDSNIVKSYADNLNLKFFETSSKNSINVEETFITLVEDILLKKNYQFNNITKNKNNQDEDFNKKKGCSIN.

Position 14–21 (14–21) interacts with GTP; the sequence is GDWNVGKS. Residues 36–44 carry the Effector region motif; it reads TKLSMGEHF. Residues 62–66 and 120–123 each bind GTP; these read DTSGM and SKFD. At C195 the chain carries Cysteine methyl ester. The S-geranylgeranyl cysteine moiety is linked to residue C195. Residues 196–198 constitute a propeptide, removed in mature form; sequence SIN.

It belongs to the small GTPase superfamily. Rab family.

Its subcellular location is the cell membrane. In Dictyostelium discoideum (Social amoeba), this protein is Ras-related protein RabH (rabH).